Consider the following 499-residue polypeptide: MEVSSRPPSNFDPGNYVEVSDPSTHLPSKVVIQDITTELHCPLCNDWFRDPLMLTCGHNFCQACIQNYWKMQAKETFCPECKMLCQYSNCTFNLVLEKLVEKIKRLPLLKGHPQCPEHGENLKLFSKPDGKMICFQCKDARLSMGQSKDFLQISEAVRFFTEELAIYQSQLQTTLKELQSLRTMQKDAIAAYKDNKIQLQQNLSLEFLKLHQFLHNKEKDILNDLRDEGKVLNEEMDANLNQIQEQCLLAKDMLANIQARMEQQNSFDFLTDITKLLENMEKGMKTLVPRQLISKKLSLGRFKGPIQYTIWREMQSILSPGPSQLTLDPKTAHPNLVLSNSRTSVCHGDVKQVMPDDPERFDSSVAVLGSKGFTSGKWYWEIEVAKKTKWTIGIVRESIIRKGSCPLTPEQGFWLLRLRNQTDLKALDLPSCSLNLGDLRRVGVYLDYEGGQVSFYNATNMTHLYTFTSVFLEKLFPYLCPCLNDGGENKEPLHIVHPQ.

Positions M1–Q152 are necessary for nuclear localization. The RING-type zinc-finger motif lies at C41–K82. A coiled-coil region spans residues F160 to N265. The B30.2/SPRY domain maps to P305–Q499. S341 carries the post-translational modification Phosphoserine.

The protein belongs to the TRIM/RBCC family. As to quaternary structure, homo-multimer; required for antiviral activity. Interacts with PML. Post-translationally, phosphorylated. Phosphorylation is necessary for nuclear localization.

The protein resides in the cytoplasm. It localises to the nucleus. Its subcellular location is the nucleus speckle. The protein localises to the cytoskeleton. It is found in the microtubule organizing center. The protein resides in the centrosome. It catalyses the reaction S-ubiquitinyl-[E2 ubiquitin-conjugating enzyme]-L-cysteine + [acceptor protein]-L-lysine = [E2 ubiquitin-conjugating enzyme]-L-cysteine + N(6)-ubiquitinyl-[acceptor protein]-L-lysine.. The protein operates within protein modification; protein ubiquitination. E3 ubiquitin ligase that plays an important role in antiviral immunity by restricting different viral infections including dengue virus or vesicular stomatitis indiana virus. Ubiquitinates viral proteins such as dengue virus NS3 thereby limiting infection. In addition, acts as a key mediator of type I interferon induced microtubule stabilization by directly associating to microtubules independently of its E3 ligase activity. Also plays a role in cataract formation together with TP53. Mechanistically, inhibits UVB-induced cell apoptosis and reactive oxygen species (ROS) production by inducing TP53 ubiquitination. Regulates centrosome dynamics and mitotic progression by ubiquitinating STK3/MST2; leading to its redistribution to the perinuclear cytoskeleton and subsequent phosphorylation by PLK1. In Rattus norvegicus (Rat), this protein is E3 ubiquitin-protein ligase TRIM69 (Trim69).